An 807-amino-acid polypeptide reads, in one-letter code: Glycerol-3-phosphate acyltransferase (807 aa).

Positions 308-313 match the HXXXXD motif motif; the sequence is CHRSHM.

The protein belongs to the GPAT/DAPAT family.

The protein resides in the cell inner membrane. It carries out the reaction sn-glycerol 3-phosphate + an acyl-CoA = a 1-acyl-sn-glycero-3-phosphate + CoA. Its pathway is phospholipid metabolism; CDP-diacylglycerol biosynthesis; CDP-diacylglycerol from sn-glycerol 3-phosphate: step 1/3. The protein is Glycerol-3-phosphate acyltransferase of Shewanella pealeana (strain ATCC 700345 / ANG-SQ1).